A 340-amino-acid chain; its full sequence is Guanine nucleotide-binding protein subunit beta-1 (340 aa).

Ser-29 carries the post-translational modification Phosphoserine. 7 WD repeats span residues 53–92, 95–134, 141–179, 182–221, 224–263, 268–307, and 310–340; these read GHLA…KVHA, LRSS…GNVR, GHGG…QVTS, GHTG…CKQT, GHES…ELAM, NIIC…RSGI, and GHDN…RVWN.

It belongs to the WD repeat G protein beta family. In terms of assembly, g proteins are composed of 3 units, alpha, beta and gamma. In terms of tissue distribution, expressed in the brain neuropil and cortex, and the thoracic ganglion (at protein level). Expression detected in eye at protein level but not at mRNA level, suggesting cross reactivity of antibodies to the similar Gbeta76C protein.

Functionally, guanine nucleotide-binding proteins (G proteins) are involved as a modulator or transducer in various transmembrane signaling systems. The beta and gamma chains are required for the GTPase activity, for replacement of GDP by GTP, and for G protein-effector interaction. This chain is Guanine nucleotide-binding protein subunit beta-1 (Gbeta13F), found in Drosophila melanogaster (Fruit fly).